A 2368-amino-acid polypeptide reads, in one-letter code: Voltage-dependent P/Q-type calcium channel subunit alpha-1A (2368 aa).

The Cytoplasmic portion of the chain corresponds to 1–100 (MARFGDEMPG…KYAKKITEWP (100 aa)). An I repeat occupies 65–365 (NPIPVRQNCL…LVLGVLSGEF (301 aa)). A helical membrane pass occupies residues 101-119 (PFEYMILATIIANCIVLAL). Topologically, residues 120 to 138 (EQHLPDDDKTPMSERLDDT) are extracellular. Residues 139-156 (EPYFIGIFCFEAGIKIVA) form a helical membrane-spanning segment. The Cytoplasmic segment spans residues 157–168 (LGFAFHKGSYLR). Residues 169–184 (NGWNVMDFVVVLTGIL) form a helical membrane-spanning segment. Over 185-192 (ATVGTEFD) the chain is Extracellular. A helical membrane pass occupies residues 193–211 (LRTLRAVRVLRPLKLVSGI). Residues 212-230 (PSLQVVLKSIMKAMIPLLQ) are Cytoplasmic-facing. A helical transmembrane segment spans residues 231 to 250 (IGLLLFFAILIFAIIGLEFY). Over 251-337 (MGKFHTTCFE…NSNDASGNTW (87 aa)) the chain is Extracellular. N-linked (GlcNAc...) asparagine glycosylation occurs at N285. Position 320 (E320) interacts with Ca(2+). A helical transmembrane segment spans residues 338–362 (NWLYFIPLIIIGSFFMLNLVLGVLS). Topologically, residues 363-489 (GEFAKERERV…FYIRRMVKTQ (127 aa)) are cytoplasmic. Positions 385-402 (QQIERELNGYMEWISKAE) are binding to the beta subunit. T411 carries the phosphothreonine modification. S450 and S453 each carry phosphoserine. The II repeat unit spans residues 475–719 (ERRMRFYIRR…VFLAIAVDNL (245 aa)). Residues 490 to 509 (AFYWTVLSLVALNTLCVAIV) form a helical membrane-spanning segment. Topologically, residues 510 to 523 (HYNQPEWLSDFLYY) are extracellular. The helical transmembrane segment at 524–543 (AEFIFLGLFMSEMFIKMYGL) threads the bilayer. Topologically, residues 544 to 551 (GTRPYFHS) are cytoplasmic. The helical transmembrane segment at 552–570 (SFNCFDCGVIIGSIFEVIW) threads the bilayer. Over 571 to 580 (AVIKPGTSFG) the chain is Extracellular. Residues 581-599 (ISVLRALRLLRIFKVTKYW) form a helical membrane-spanning segment. At 600–618 (ASLRNLVVSLLNSMKSIIS) the chain is on the cytoplasmic side. A helical transmembrane segment spans residues 619 to 638 (LLFLLFLFIVVFALLGMQLF). Residues 639–691 (GGQFNFDEGTPPTNFDTFPAAIMTVFQILTGEDWNEVMYDGIKSQGGVQGGMV) lie on the Extracellular side of the membrane. Position 670 (E670) interacts with Ca(2+). The chain crosses the membrane as a helical span at residues 692 to 716 (FSIYFIVLTLFGNYTLLNVFLAIAV). Residues 717 to 1190 (DNLANAQELT…TNPLRRLCHY (474 aa)) lie on the Cytoplasmic side of the membrane. A phosphoserine mark is found at S752 and S755. The disordered stretch occupies residues 762–781 (AVKEQQKNQKPTKSVWEQRT). Over residues 769-779 (NQKPTKSVWEQ) the composition is skewed to polar residues. At S792 the chain carries Phosphoserine. Disordered regions lie at residues 823 to 1117 (PLVV…RKPE) and 1137 to 1170 (VNKNANPDPLPKKEEEKKEEEEADPGEDGPKPMP). Basic and acidic residues-rich tracts occupy residues 850 to 862 (RPRESARDPDARR), 871 to 924 (APGR…EGEP), and 932 to 958 (RPGDEPDDRPERRPRPRDATRPARAAD). Phosphoserine occurs at positions 1038, 1042, and 1051. The segment covering 1056 to 1073 (GNSTNPGPALATNPQNAA) has biased composition (polar residues). Positions 1074–1083 (SRRTPNNPGN) are enriched in low complexity. Residues 1094 to 1111 (ENSLIVTNPSSTQPNSAK) are compositionally biased toward polar residues. A compositionally biased stretch (acidic residues) spans 1153-1163 (KKEEEEADPGE). The stretch at 1182 to 1465 (NPLRRLCHYI…IFVALIIITF (284 aa)) is one III repeat. The helical transmembrane segment at 1191–1214 (ILNLRYFEMCILMVIAMSSIALAA) threads the bilayer. The Extracellular portion of the chain corresponds to 1215 to 1231 (EDPVQPNAPRNNVLRYF). A helical membrane pass occupies residues 1232–1251 (DYVFTGVFTFEMVIKMIDLG). Over 1252-1258 (LVLHQGA) the chain is Cytoplasmic. Residues 1259–1282 (YFRDLWNILDFIVVSGALVAFAFT) traverse the membrane as a helical segment. The Extracellular portion of the chain corresponds to 1283 to 1293 (GNSKGKDINTI). Residues 1294–1311 (KSLRVLRVLRPLKTIKRL) traverse the membrane as a helical segment. Residues 1312–1330 (PKLKAVFDCVVNSLKNVFN) are Cytoplasmic-facing. A helical membrane pass occupies residues 1331–1350 (ILIVYMLFMFIFAVVAVQLF). Topologically, residues 1351–1437 (KGKFFHCTDE…QGPSPGYRME (87 aa)) are extracellular. E1411 is a binding site for Ca(2+). Residues 1438 to 1462 (MSIFYVVYFVVFPFFFVNIFVALII) form a helical membrane-spanning segment. Topologically, residues 1463–1518 (ITFQEQGDKMMEEYSLEKNERACIDFAISAKPLTRHMPQNKQSFQYRMWQFVVSPP) are cytoplasmic. The stretch at 1502 to 1765 (NKQSFQYRMW…LFVAVIMDNF (264 aa)) is one IV repeat. A helical transmembrane segment spans residues 1519–1537 (FEYTIMAMIALNTIVLMMK). Over 1538 to 1551 (FYGASVAYENALRV) the chain is Extracellular. The helical transmembrane segment at 1552–1573 (FNIVFTSLFSLECVLKVMAFGI) threads the bilayer. Topologically, residues 1574-1580 (LNYFRDA) are cytoplasmic. A helical transmembrane segment spans residues 1581-1600 (WNIFDFVTVLGSITDILVTE). Residues 1601 to 1607 (FGNNFIN) are Extracellular-facing. An N-linked (GlcNAc...) asparagine glycan is attached at N1607. Residues 1608 to 1626 (LSFLRLFRAARLIKLLRQG) traverse the membrane as a helical segment. The Cytoplasmic portion of the chain corresponds to 1627 to 1645 (YTIRILLWTFVQSFKALPY). Residues 1646–1665 (VCLLIAMLFFIYAIIGMQVF) form a helical membrane-spanning segment. Over 1666-1737 (GNIGIDGEDE…ILTADCGNEF (72 aa)) the chain is Extracellular. A helical transmembrane segment spans residues 1738–1763 (AYFYFVSFIFLCSFLMLNLFVAVIMD). Residues 1764 to 2368 (NFEYLTRDSS…AYSESEDDWC (605 aa)) are Cytoplasmic-facing. The residue at position 1935 (T1935) is a Phosphothreonine. Residues 1940–2368 (QRMEPPSPTQ…AYSESEDDWC (429 aa)) form a disordered region. 2 stretches are compositionally biased toward polar residues: residues 1948 to 1963 (TQEGGPSQNALPSTQL) and 1981 to 1997 (SWVTQRAQEMFQKTGTW). Residues S1998, S2016, S2028, S2030, S2071, and S2091 each carry the phosphoserine modification. A compositionally biased stretch (polar residues) spans 2008–2017 (PNSQPNSQSV). Residues 2018–2034 (EMREMGTDGYSDSEHYL) show a composition bias toward basic and acidic residues. The segment covering 2063 to 2073 (DLSTISDTSPM) has biased composition (polar residues). Composition is skewed to basic and acidic residues over residues 2085–2102 (RRLDDYSLERVPPEENQR) and 2143–2153 (PSKDRDQDRGR). Over residues 2154–2172 (PKDRKHRPHHHHHHHHHHP) the composition is skewed to basic residues. Basic and acidic residues predominate over residues 2173–2209 (PAPDRDRYAQERPDTGRARAREQRWSRSPSEGREHTT). The span at 2213–2231 (GSSSVSGSPAPSTSGTSTP) shows a compositional bias: low complexity. A compositionally biased stretch (basic and acidic residues) spans 2289 to 2305 (EGPRPRGADYTEPDSPR).

Belongs to the calcium channel alpha-1 subunit (TC 1.A.1.11) family. CACNA1A subfamily. In terms of assembly, voltage-dependent calcium channels are multisubunit complexes, consisting of alpha-1, alpha-2, beta and delta subunits in a 1:1:1:1 ratio. The channel activity is directed by the pore-forming and voltage-sensitive alpha-1 subunit. In many cases, this subunit is sufficient to generate voltage-sensitive calcium channel activity. The auxiliary subunits beta and alpha-2/delta linked by a disulfide bridge regulate the channel activity. Interacts with CABP1. Interacts with the spider omega-agatoxin-IVA (AC P30288). Interacts with TSPOAP1. In terms of tissue distribution, brain specific; mainly found in the cerebellum, olfactory bulb, cerebral cortex, hippocampus, and inferior colliculus. In the hippocampus, expression occurs in pyramidal and granule neurons, as well as in interneurons. Purkinje cells contain predominantly P-type VSCC, the Q-type being a prominent calcium current in cerebellar granule cells.

The protein localises to the cell membrane. It carries out the reaction Ca(2+)(in) = Ca(2+)(out). In terms of biological role, voltage-sensitive calcium channels (VSCC) mediate the entry of calcium ions into excitable cells and are also involved in a variety of calcium-dependent processes, including muscle contraction, hormone or neurotransmitter release, gene expression, cell motility, cell division and cell death. The isoform alpha-1A gives rise to P and/or Q-type calcium currents. P/Q-type calcium channels belong to the 'high-voltage activated' (HVA) group and are specifically blocked by the spider omega-agatoxin-IVA (AC P54282). They are however insensitive to dihydropyridines (DHP). The protein is Voltage-dependent P/Q-type calcium channel subunit alpha-1A of Mus musculus (Mouse).